The chain runs to 347 residues: GMP reductase (347 aa).

108 to 131 (TDFIKLSEILAKSEDLNFICIDIA) contacts NADP(+). K(+) contacts are provided by Gly-181 and Gly-183. Cys-186 (thioimidate intermediate) is an active-site residue. 216 to 239 (IIGDGGCSCAGDVAKAFGGGADFV) is a binding site for NADP(+).

It belongs to the IMPDH/GMPR family. GuaC type 1 subfamily. Homotetramer.

It catalyses the reaction IMP + NH4(+) + NADP(+) = GMP + NADPH + 2 H(+). In terms of biological role, catalyzes the irreversible NADPH-dependent deamination of GMP to IMP. It functions in the conversion of nucleobase, nucleoside and nucleotide derivatives of G to A nucleotides, and in maintaining the intracellular balance of A and G nucleotides. The protein is GMP reductase of Shewanella pealeana (strain ATCC 700345 / ANG-SQ1).